A 245-amino-acid polypeptide reads, in one-letter code: Large ribosomal subunit protein uL3 (245 aa).

Gln-151 carries the post-translational modification N5-methylglutamine. A disordered region spans residues 214–245 (KDAPQPGKYRLANSAAPQPAEADAASDTGAQA). Positions 225-245 (ANSAAPQPAEADAASDTGAQA) are enriched in low complexity.

Belongs to the universal ribosomal protein uL3 family. Part of the 50S ribosomal subunit. Forms a cluster with proteins L14 and L19. Post-translationally, methylated by PrmB.

Functionally, one of the primary rRNA binding proteins, it binds directly near the 3'-end of the 23S rRNA, where it nucleates assembly of the 50S subunit. This Methylocella silvestris (strain DSM 15510 / CIP 108128 / LMG 27833 / NCIMB 13906 / BL2) protein is Large ribosomal subunit protein uL3.